Reading from the N-terminus, the 189-residue chain is Elongation factor P (189 aa).

This sequence belongs to the elongation factor P family.

The protein localises to the cytoplasm. It functions in the pathway protein biosynthesis; polypeptide chain elongation. Its function is as follows. Involved in peptide bond synthesis. Stimulates efficient translation and peptide-bond synthesis on native or reconstituted 70S ribosomes in vitro. Probably functions indirectly by altering the affinity of the ribosome for aminoacyl-tRNA, thus increasing their reactivity as acceptors for peptidyl transferase. The polypeptide is Elongation factor P (Pseudomonas syringae pv. syringae (strain B728a)).